A 247-amino-acid polypeptide reads, in one-letter code: NH(3)-dependent NAD(+) synthetase (247 aa).

G29–S36 contributes to the ATP binding site. D35 contacts Mg(2+). R112 is a deamido-NAD(+) binding site. An ATP-binding site is contributed by T132. E137 is a binding site for Mg(2+). Deamido-NAD(+) is bound by residues K145 and D152. ATP-binding residues include K161 and S183. H233–K234 serves as a coordination point for deamido-NAD(+).

Belongs to the NAD synthetase family. Homodimer.

The catalysed reaction is deamido-NAD(+) + NH4(+) + ATP = AMP + diphosphate + NAD(+) + H(+). The protein operates within cofactor biosynthesis; NAD(+) biosynthesis; NAD(+) from deamido-NAD(+) (ammonia route): step 1/1. Functionally, catalyzes the ATP-dependent amidation of deamido-NAD to form NAD. Uses ammonia as a nitrogen source. This Archaeoglobus fulgidus (strain ATCC 49558 / DSM 4304 / JCM 9628 / NBRC 100126 / VC-16) protein is NH(3)-dependent NAD(+) synthetase.